Consider the following 370-residue polypeptide: NADH-quinone oxidoreductase subunit D (370 aa).

Belongs to the complex I 49 kDa subunit family. As to quaternary structure, NDH-1 is composed of 14 different subunits. Subunits NuoB, C, D, E, F, and G constitute the peripheral sector of the complex.

The protein localises to the cell membrane. It carries out the reaction a quinone + NADH + 5 H(+)(in) = a quinol + NAD(+) + 4 H(+)(out). Its function is as follows. NDH-1 shuttles electrons from NADH, via FMN and iron-sulfur (Fe-S) centers, to quinones in the respiratory chain. The immediate electron acceptor for the enzyme in this species is believed to be a menaquinone. Couples the redox reaction to proton translocation (for every two electrons transferred, four hydrogen ions are translocated across the cytoplasmic membrane), and thus conserves the redox energy in a proton gradient. This Desulfitobacterium hafniense (strain Y51) protein is NADH-quinone oxidoreductase subunit D.